Here is a 1596-residue protein sequence, read N- to C-terminus: Protein son of sevenless (1596 aa).

The region spanning 248-434 (TYEETVKELI…HPLHCDLEKV (187 aa)) is the DH domain. The PH domain maps to 480 to 588 (EFIREDSLSK…WMADLLMVIT (109 aa)). Residues 637–792 (GVPMIKGATL…SVLKIVQRKN (156 aa)) form the N-terminal Ras-GEF domain. A Ras-GEF domain is found at 829–1066 (HPLELARQLT…YNESLRIEPR (238 aa)). Disordered regions lie at residues 1073–1105 (KFPR…LSNS), 1175–1212 (RNTS…AHVW), 1235–1291 (EHLP…TAST), 1340–1392 (RAVP…NHST), and 1465–1596 (PLPI…TNEE). The span at 1096 to 1105 (TNSSSKLSNS) shows a compositional bias: low complexity. 2 stretches are compositionally biased toward polar residues: residues 1175-1195 (RNTS…NNGE) and 1280-1291 (MQNSPTHSTAST). Residues 1352 to 1366 (ERTESCADMAQKRQA) are compositionally biased toward basic and acidic residues. Positions 1469–1489 (SPAASSSTTTSPLTPAMSPMS) are enriched in low complexity. The segment covering 1526 to 1542 (HHQHHATHLPHHPHQHH) has biased composition (basic residues). A phosphoserine mark is found at S1550 and S1551.

May form a complex with sevenless and DRK.

In terms of biological role, promotes the exchange of Ras-bound GDP by GTP. Functions in signaling pathways initiated by the sevenless and epidermal growth factor receptor tyrosine kinases; implies a role for the ras pathway in neuronal development. This is Protein son of sevenless (Sos) from Drosophila melanogaster (Fruit fly).